Reading from the N-terminus, the 20-residue chain is Toxin b subunit beta (20 aa).

As to quaternary structure, toxin b is a heterodimer composed of toxin alpha and toxin beta. In terms of tissue distribution, expressed by the venom gland.

Its subcellular location is the secreted. Its function is as follows. Binds to sodium channels (Nav) and affects the channel activation process. The chain is Toxin b subunit beta from Androctonus crassicauda (Arabian fat-tailed scorpion).